Consider the following 2124-residue polypeptide: Genome polyprotein (2124 aa).

G2 carries N-myristoyl glycine; by host lipidation. Residues 873 to 880 (VARDLLLI) form a host EIF4E binding region. The SF3 helicase domain maps to 1102 to 1264 (VQIATYFRNF…SAATKNGKLD (163 aa)). 1130 to 1137 (GKPGVGKS) is an ATP binding site. Residues 1415–1437 (DKPKEEEEEPEEKKEKKTEESKE) are compositionally biased toward basic and acidic residues. The interval 1415–1446 (DKPKEEEEEPEEKKEKKTEESKEAAGPYNGPT) is disordered. Y1442 bears the O-(5'-phospho-RNA)-tyrosine mark. One can recognise a Peptidase C3 domain in the interval 1459–1648 (SPLMDMEKKI…VGTRLTARMI (190 aa)). Catalysis depends on for protease 3C activity residues H1501, D1535, and C1612. A RdRp catalytic domain is found at 1893 to 2011 (PYLYDFDYSN…ASKFELDLVM (119 aa)). Catalysis depends on for RdRp activity residues D1899 and D1997.

It belongs to the picornaviruses polyprotein family. In terms of assembly, interacts with host EIF4E. As to quaternary structure, interacts with host IFIH1/MDA5; this interaction inhibits the induction of the IFN-beta signal pathway. Post-translationally, specific enzymatic cleavages by the viral protease in vivo yield a variety of precursors and mature proteins. The polyprotein seems to be cotranslationally cleaved at the 2A/2B junction by a ribosomal skip from one codon to the next without formation of a peptide bond. This process would release the P1-2A peptide from the translational complex. During virion maturation, immature virions are rendered infectious following cleavage of VP0 into VP4 and VP2. This maturation seems to be an autocatalytic event triggered by the presence of RNA in the capsid and is followed by a conformational change of the particle. In terms of processing, myristoylation is required during RNA encapsidation and formation of the mature virus particle. Post-translationally, uridylylated by the polymerase and is covalently linked to the 5'-end of genomic RNA. This uridylylated form acts as a nucleotide-peptide primer for the polymerase.

The protein localises to the virion. The protein resides in the host cytoplasm. Its subcellular location is the host nucleus. It is found in the host nucleolus. It localises to the host cytoplasmic vesicle membrane. It catalyses the reaction RNA(n) + a ribonucleoside 5'-triphosphate = RNA(n+1) + diphosphate. The catalysed reaction is ATP + H2O = ADP + phosphate + H(+). It carries out the reaction Selective cleavage of Gln-|-Gly bond in the poliovirus polyprotein. In other picornavirus reactions Glu may be substituted for Gln, and Ser or Thr for Gly.. In terms of biological role, forms an icosahedral capsid of pseudo T=3 symmetry with capsid proteins VP2 and VP3. Together they form an icosahedral capsid composed of 60 copies of each VP1, VP2, and VP3, with a diameter of approximately 300 Angstroms. VP4 lies on the inner surface of the protein shell formed by VP1, VP2 and VP3. All the three latter proteins contain a beta-sheet structure called beta-barrel jelly roll. VP1 is situated at the 12 fivefold axes, whereas VP2 and VP3 are located at the quasi-sixfold axes. Lies on the inner surface of the capsid shell. After binding to the host receptor, the capsid undergoes conformational changes. Capsid protein VP4 is released, capsid protein VP1 N-terminus is externalized, and together, they shape a pore in the host membrane through which the viral genome is translocated into the host cell cytoplasm. After genome has been released, the channel shrinks. Its function is as follows. VP0 precursor is a component of immature procapsids. Functionally, involved in host translation shutoff by inhibiting cap-dependent mRNA translation. Nuclear localization is required for this function. The resulting inhibition of cellular protein synthesis serves to ensure maximal viral gene expression and to evade host immune response. In terms of biological role, affects membrane integrity and causes an increase in membrane permeability. Associates with and induces structural rearrangements of intracellular membranes. It displays RNA-binding, nucleotide binding and NTPase activities. Interacts with IFIH1/MDA5 to inhibit the induction of the IFN-beta signal pathway. Its function is as follows. Serves as membrane anchor via its hydrophobic domain. Functionally, forms a primer, VPg-pU, which is utilized by the polymerase for the initiation of RNA chains. In terms of biological role, cysteine protease that generates mature viral proteins from the precursor polyprotein. In addition to its proteolytic activity, it binds to viral RNA, and thus influences viral genome replication. RNA and substrate cooperatively bind to the protease. Cleaves host PABP1, this cleavage is important for viral replication. Cleaves host TANK and disrupts the TANK-TBK1-IKKepsilon-IRF3 complex, thereby inhibiting the induction of the IFN-beta signal pathway. Replicates the genomic and antigenomic RNAs by recognizing replications specific signals. Performs VPg uridylylation. The polypeptide is Genome polyprotein (Cosavirus A (isolate Human/Pakistan/0553/-) (HCoSV-A)).